The chain runs to 478 residues: WD repeat-containing protein AAC3 (478 aa).

Disordered stretches follow at residues 33 to 53 and 106 to 140; these read HPLF…QQQQ and SQIH…QYTN. Over residues 106–125 the composition is skewed to low complexity; the sequence is SQIHQQSQQSQLSNNLNSNS. Positions 126–140 are enriched in polar residues; sequence KESTNIPKTNTQYTN. 7 WD repeats span residues 163–202, 226–268, 270–307, 310–349, 357–396, 399–438, and 440–478; these read GNKK…NSNN, GHDG…GTVS, NSEN…TLKI, FNGE…TTHV, GHTA…CVKT, KSTF…PIHT, and ECSG…GYHS.

This sequence belongs to the THOC3 family.

The protein is WD repeat-containing protein AAC3 (AAC3) of Dictyostelium discoideum (Social amoeba).